The primary structure comprises 677 residues: Pentatricopeptide repeat-containing protein At5g39350 (677 aa).

16 PPR repeats span residues 48-78 (SGHILSTLSVTYALCGHITYARKLFEEMPQS), 79-113 (SLLSYNIVIRMYVREGLYHDAISVFIRMVSEGVKC), 116-146 (DGYTYPFVAKAAGELKSMKLGLVVHGRILRS), 151-181 (DKYVQNALLAMYMNFGKVEMARDVFDVMKNR), 182-216 (DVISWNTMISGYYRNGYMNDALMMFDWMVNESVDL), 217-251 (DHATIVSMLPVCGHLKDLEMGRNVHKLVEEKRLGD), 252-282 (KIEVKNALVNMYLKCGRMDEARFVFDRMERR), 283-317 (DVITWTCMINGYTEDGDVENALELCRLMQFEGVRP), 318-352 (NAVTIASLVSVCGDALKVNDGKCLHGWAVRQQVYS), 353-383 (DIIIETSLISMYAKCKRVDLCFRVFSGASKY), 384-418 (HTGPWSAIIAGCVQNELVSDALGLFKRMRREDVEP), 419-453 (NIATLNSLLPAYAALADLRQAMNIHCYLTKTGFMS), 454-488 (SLDAATGLVHVYSKCGTLESAHKIFNGIQEKHKSK), 489-523 (DVVLWGALISGYGMHGDGHNALQVFMEMVRSGVTP), 524-554 (NEITFTSALNACSHSGLVEEGLTLFRFMLEH), and 560-590 (RSNHYTCIVDLLGRAGRLDEAYNLITTIPFE). The tract at residues 595 to 670 (VWGALLAACV…KPGHSTIEIR (76 aa)) is type E motif.

Belongs to the PPR family. PCMP-E subfamily.

The chain is Pentatricopeptide repeat-containing protein At5g39350 (PCMP-E16) from Arabidopsis thaliana (Mouse-ear cress).